The following is a 520-amino-acid chain: METWSVDQVCKWLVEKNLGELVPRFQEEEVSGATLLALNDRMVQQLVKKIGHQAVLMDFIKKYKQGNQELKPTGGPADTSTLTPAQAAPEHEQNPSPTSHGDQTSLYPAVLDNRLIDQRVLKQRRNVKHVLARHKALQWTKSYILPEFPYDVKCMLVEQKRPDHSMRIRIIEFLQADMTKYLEGSLYPTTQQYNDVVNALLQAHPFLDEDGCGFFLWKRALKDRFKYIRRPIEDDEQVMRNKCKFGHRRGQTRKSLADIQSNEIKIVQIKEESAHLDSEVDEHISWFQQEYMKTERDWREVDKRMSQTLEIRRKMIGGQTPLKDILKMFPFLKCPYQMFREVQILTKTDIYKKTRHILESYSENILTAFSVLDNPINTALQEKMKHYTDEGVLKSPEVLKNMKMTATCLLLPHVFGDEPSLFVVVNGKVHVSTPVLEVKNPFHINGCEFSLYLNKEKLTKVDDCVTALAALVSAFRVFGIECPRRLSQTFNFLETLIFDMQSPQFPSLKEKEIRSQPPIT.

An SAM domain is found at 4-71 (WSVDQVCKWL…KYKQGNQELK (68 aa)). A disordered region spans residues 67–104 (NQELKPTGGPADTSTLTPAQAAPEHEQNPSPTSHGDQT). The segment covering 94-104 (NPSPTSHGDQT) has biased composition (polar residues).

This Mus musculus (Mouse) protein is Sterile alpha motif domain-containing protein 3 (Samd3).